The following is a 396-amino-acid chain: Putative glycosyltransferase HOC1 (396 aa).

Residues 2 to 13 (AKTTKRASSFRR) are Cytoplasmic-facing. Residues 14 to 34 (LMIFAIIALISLAFGVRYLFH) traverse the membrane as a helical; Signal-anchor for type II membrane protein segment. Residues 35 to 396 (NSNATDLQKI…WKNTPKVEQK (362 aa)) are Lumenal-facing. The N-linked (GlcNAc...) asparagine glycan is linked to Asn-37.

It belongs to the glycosyltransferase 32 family. As to quaternary structure, component of the M-Pol II complex composed of ANP1, MNN9, MNN10, MNN11 and HOC1.

It localises to the golgi apparatus. Its subcellular location is the cis-Golgi network membrane. Functionally, the M-Pol II complex possesses alpha-1,6-mannosyltransferase activity and is probably involved in the elongation of the mannan backbone of N-linked glycans on cell wall and periplasmic proteins. The sequence is that of Putative glycosyltransferase HOC1 (HOC1) from Saccharomyces cerevisiae (strain ATCC 204508 / S288c) (Baker's yeast).